We begin with the raw amino-acid sequence, 267 residues long: MPVIDIIFRVDEICKKYDKYDIDKHREIGASGDDAFSRLFTSIDSDIEAVLRKAELASTEKNRAAAVAMNAEVRRTKARLAEDVVKLQKLAVKKIKGLTREERESRCDLVIALADRLQAIPDGNEHGAKQANSDWGGASAPNKNIKFDMSEEDMDDGFFQQSEESSQFRQEYEMRRKKQDEGLDIISEGLDALKNLARDMNEELDKQVPLMEEMETKVDGATSDLKNTNVRLKKQLVQMRSSRNFCIDIILLCVILGIVSYIYNALN.

At 1–244 the chain is on the cytoplasmic side; sequence MPVIDIIFRV…QLVQMRSSRN (244 aa). Positions 53–87 form a coiled coil; that stretch reads KAELASTEKNRAAAVAMNAEVRRTKARLAEDVVKL. Residues 173 to 235 form the t-SNARE coiled-coil homology domain; that stretch reads EMRRKKQDEG…KNTNVRLKKQ (63 aa). Residues 245 to 265 form a helical; Anchor for type IV membrane protein membrane-spanning segment; the sequence is FCIDIILLCVILGIVSYIYNA. At 266-267 the chain is on the vesicular side; that stretch reads LN.

Belongs to the syntaxin family. As to quaternary structure, part of the t-SNARE complex. As to expression, expressed in root, leaf, stem, flower and silique.

The protein resides in the membrane. Functionally, vesicle trafficking protein that functions in the secretory pathway. The protein is Syntaxin-72 (SYP72) of Arabidopsis thaliana (Mouse-ear cress).